Reading from the N-terminus, the 326-residue chain is Transposase for insertion sequence element IS4351 (326 aa).

Positions 156-317 constitute an Integrase catalytic domain; the sequence is IDERPEIVEL…TPNEKFKQII (162 aa).

This sequence belongs to the transposase IS30 family.

Required for the transposition of the insertion element. This is Transposase for insertion sequence element IS4351 from Bacteroides fragilis.